The chain runs to 948 residues: Sensor histidine kinase RcsC (948 aa).

Residues 1–20 (MKYLASFRTTLKVSRYLFRA) lie on the Cytoplasmic side of the membrane. Residues 21 to 41 (LALLIWLLIAFVSVFYIVNAL) traverse the membrane as a helical segment. Residues 42–313 (HQRESEIRQE…PVDLVLERIR (272 aa)) are Periplasmic-facing. A helical transmembrane segment spans residues 314–334 (ILILNAILLNVLVGAGLFTLA). The Cytoplasmic segment spans residues 335–948 (RMYERRIFIP…YAERVRKTRA (614 aa)). Positions 357–425 (QFNRKIVASA…VLTSNNTNLQ (69 aa)) constitute a PAS domain. Residues 476-692 (TVSHELRTPL…QFTLRIPLYG (217 aa)) form the Histidine kinase domain. The residue at position 479 (His479) is a Phosphohistidine; by autocatalysis. The ABL domain maps to 705–805 (AGTCCWLAVR…ARIYSIELDS (101 aa)). A Response regulatory domain is found at 826–940 (MILVVDDHPI…ALKQTLAVYA (115 aa)). Asp875 carries the post-translational modification 4-aspartylphosphate.

It belongs to the RcsC family. Interacts with RcsD. In terms of processing, autophosphorylated. Activation probably requires a transfer of a phosphate group from a His in the transmitter domain to an Asp in the receiver domain.

It is found in the cell inner membrane. It carries out the reaction ATP + protein L-histidine = ADP + protein N-phospho-L-histidine.. Component of the Rcs signaling system, which controls transcription of numerous genes. RcsC functions as a membrane-associated protein kinase that phosphorylates RcsD in response to environmental signals. The phosphoryl group is then transferred to the response regulator RcsB. In Salmonella typhi, this protein is Sensor histidine kinase RcsC.